The chain runs to 329 residues: Peroxidase 30 (329 aa).

Residues 1–27 form the signal peptide; that stretch reads MKTMTQLNIAVVVVVTVLIGMLRSSEA. 4 disulfide bridges follow: cysteine 38-cysteine 116, cysteine 71-cysteine 76, cysteine 122-cysteine 324, and cysteine 201-cysteine 234. The active-site Proton acceptor is histidine 69. 5 residues coordinate Ca(2+): aspartate 70, valine 73, glycine 75, aspartate 77, and serine 79. N-linked (GlcNAc...) asparagine glycans are attached at residues asparagine 83 and asparagine 155. Positions 141–165 are disordered; it reads SWSVPTGRRDGRISNKTEATNNIPP. Over residues 156–165 the composition is skewed to polar residues; that stretch reads KTEATNNIPP. Residue proline 164 coordinates substrate. N-linked (GlcNAc...) asparagine glycosylation is present at asparagine 169. Residue histidine 194 participates in heme b binding. Threonine 195 provides a ligand contact to Ca(2+). N-linked (GlcNAc...) asparagine glycans are attached at residues asparagine 210 and asparagine 240. Positions 247, 250, and 255 each coordinate Ca(2+). The N-linked (GlcNAc...) asparagine glycan is linked to asparagine 290.

Belongs to the peroxidase family. Classical plant (class III) peroxidase subfamily. Heme b is required as a cofactor. Requires Ca(2+) as cofactor. In terms of tissue distribution, mainly expressed in roots.

Its subcellular location is the secreted. The catalysed reaction is 2 a phenolic donor + H2O2 = 2 a phenolic radical donor + 2 H2O. Functionally, removal of H(2)O(2), oxidation of toxic reductants, biosynthesis and degradation of lignin, suberization, auxin catabolism, response to environmental stresses such as wounding, pathogen attack and oxidative stress. These functions might be dependent on each isozyme/isoform in each plant tissue. This is Peroxidase 30 (PER30) from Arabidopsis thaliana (Mouse-ear cress).